Here is a 166-residue protein sequence, read N- to C-terminus: Transcription antitermination protein NusB (166 aa).

Over residues 1–15 (MISDDSDRFNPRDPK) the composition is skewed to basic and acidic residues. The segment at 1–30 (MISDDSDRFNPRDPKPANAGKPSKSAKRRE) is disordered.

Belongs to the NusB family.

Its function is as follows. Involved in transcription antitermination. Required for transcription of ribosomal RNA (rRNA) genes. Binds specifically to the boxA antiterminator sequence of the ribosomal RNA (rrn) operons. In Pseudomonas fluorescens (strain ATCC BAA-477 / NRRL B-23932 / Pf-5), this protein is Transcription antitermination protein NusB.